The sequence spans 473 residues: 3-isopropylmalate dehydratase large subunit (473 aa).

Positions 351, 414, and 417 each coordinate [4Fe-4S] cluster.

It belongs to the aconitase/IPM isomerase family. LeuC type 1 subfamily. As to quaternary structure, heterodimer of LeuC and LeuD. [4Fe-4S] cluster serves as cofactor.

It carries out the reaction (2R,3S)-3-isopropylmalate = (2S)-2-isopropylmalate. Its pathway is amino-acid biosynthesis; L-leucine biosynthesis; L-leucine from 3-methyl-2-oxobutanoate: step 2/4. Functionally, catalyzes the isomerization between 2-isopropylmalate and 3-isopropylmalate, via the formation of 2-isopropylmaleate. This Acidovorax sp. (strain JS42) protein is 3-isopropylmalate dehydratase large subunit.